A 192-amino-acid chain; its full sequence is Xanthine phosphoribosyltransferase (192 aa).

Xanthine-binding residues include leucine 20 and asparagine 27. 128–132 (ANGDA) lines the 5-phospho-alpha-D-ribose 1-diphosphate pocket. Residue lysine 156 participates in xanthine binding.

This sequence belongs to the purine/pyrimidine phosphoribosyltransferase family. Xpt subfamily. In terms of assembly, homodimer.

It localises to the cytoplasm. The enzyme catalyses XMP + diphosphate = xanthine + 5-phospho-alpha-D-ribose 1-diphosphate. It participates in purine metabolism; XMP biosynthesis via salvage pathway; XMP from xanthine: step 1/1. Its function is as follows. Converts the preformed base xanthine, a product of nucleic acid breakdown, to xanthosine 5'-monophosphate (XMP), so it can be reused for RNA or DNA synthesis. The polypeptide is Xanthine phosphoribosyltransferase (Staphylococcus aureus (strain Mu3 / ATCC 700698)).